A 159-amino-acid polypeptide reads, in one-letter code: Large ribosomal subunit protein uL15 (159 aa).

Basic and acidic residues predominate over residues 1–13 (MRIHEVTPKEGST). The tract at residues 1-51 (MRIHEVTPKEGSTKRRRRVGRGISAGQGASCGFGMRGQKSRSGTGTKAGFE) is disordered. Positions 23–35 (ISAGQGASCGFGM) are enriched in gly residues.

This sequence belongs to the universal ribosomal protein uL15 family. As to quaternary structure, part of the 50S ribosomal subunit.

Its function is as follows. Binds to the 23S rRNA. The protein is Large ribosomal subunit protein uL15 of Rippkaea orientalis (strain PCC 8801 / RF-1) (Cyanothece sp. (strain PCC 8801)).